Reading from the N-terminus, the 406-residue chain is Arginine decarboxylase (406 aa).

K8 is subject to N6-(pyridoxal phosphate)lysine. 192 to 202 (VDFGGGLGIDY) contacts substrate.

It belongs to the Orn/Lys/Arg decarboxylase class-II family. SpeA subfamily. It depends on pyridoxal 5'-phosphate as a cofactor. The cofactor is Mg(2+).

It catalyses the reaction L-arginine + H(+) = agmatine + CO2. Its pathway is amine and polyamine biosynthesis; agmatine biosynthesis; agmatine from L-arginine: step 1/1. This is Arginine decarboxylase (SPE2) from Theobroma cacao (Cacao).